Reading from the N-terminus, the 544-residue chain is Chaperonin GroEL (544 aa).

ATP is bound by residues 30-33, Lys51, 87-91, Gly415, 479-481, and Asp495; these read TLGP, DGTTT, and NAA.

Belongs to the chaperonin (HSP60) family. Forms a cylinder of 14 subunits composed of two heptameric rings stacked back-to-back. Interacts with the co-chaperonin GroES.

The protein localises to the cytoplasm. The catalysed reaction is ATP + H2O + a folded polypeptide = ADP + phosphate + an unfolded polypeptide.. Its function is as follows. Together with its co-chaperonin GroES, plays an essential role in assisting protein folding. The GroEL-GroES system forms a nano-cage that allows encapsulation of the non-native substrate proteins and provides a physical environment optimized to promote and accelerate protein folding. The sequence is that of Chaperonin GroEL from Francisella tularensis subsp. tularensis (strain WY96-3418).